The chain runs to 485 residues: Probable cytosol aminopeptidase (485 aa).

Residues Lys-251 and Asp-256 each contribute to the Mn(2+) site. Lys-263 is an active-site residue. Residues Asp-274, Asp-333, and Glu-335 each coordinate Mn(2+). The active site involves Arg-337.

This sequence belongs to the peptidase M17 family. It depends on Mn(2+) as a cofactor.

The protein resides in the cytoplasm. It carries out the reaction Release of an N-terminal amino acid, Xaa-|-Yaa-, in which Xaa is preferably Leu, but may be other amino acids including Pro although not Arg or Lys, and Yaa may be Pro. Amino acid amides and methyl esters are also readily hydrolyzed, but rates on arylamides are exceedingly low.. The catalysed reaction is Release of an N-terminal amino acid, preferentially leucine, but not glutamic or aspartic acids.. In terms of biological role, presumably involved in the processing and regular turnover of intracellular proteins. Catalyzes the removal of unsubstituted N-terminal amino acids from various peptides. The protein is Probable cytosol aminopeptidase of Brucella melitensis biotype 1 (strain ATCC 23456 / CCUG 17765 / NCTC 10094 / 16M).